A 515-amino-acid polypeptide reads, in one-letter code: 1-pyrroline-5-carboxylate dehydrogenase (515 aa).

Active-site residues include E286 and C320.

The protein belongs to the aldehyde dehydrogenase family. RocA subfamily.

It carries out the reaction L-glutamate 5-semialdehyde + NAD(+) + H2O = L-glutamate + NADH + 2 H(+). Its pathway is amino-acid degradation; L-proline degradation into L-glutamate; L-glutamate from L-proline: step 2/2. The protein is 1-pyrroline-5-carboxylate dehydrogenase of Bacillus anthracis (strain A0248).